The primary structure comprises 142 residues: Large ribosomal subunit protein uL11 (142 aa).

This sequence belongs to the universal ribosomal protein uL11 family. In terms of assembly, part of the ribosomal stalk of the 50S ribosomal subunit. Interacts with L10 and the large rRNA to form the base of the stalk. L10 forms an elongated spine to which L12 dimers bind in a sequential fashion forming a multimeric L10(L12)X complex. One or more lysine residues are methylated.

In terms of biological role, forms part of the ribosomal stalk which helps the ribosome interact with GTP-bound translation factors. This Mannheimia succiniciproducens (strain KCTC 0769BP / MBEL55E) protein is Large ribosomal subunit protein uL11.